The following is a 256-amino-acid chain: Thiazole synthase (256 aa).

Lys-99 (schiff-base intermediate with DXP) is an active-site residue. 1-deoxy-D-xylulose 5-phosphate is bound by residues Gly-160, 186–187 (AG), and 208–209 (NT).

It belongs to the ThiG family. Homotetramer. Forms heterodimers with either ThiH or ThiS.

It is found in the cytoplasm. It catalyses the reaction [ThiS sulfur-carrier protein]-C-terminal-Gly-aminoethanethioate + 2-iminoacetate + 1-deoxy-D-xylulose 5-phosphate = [ThiS sulfur-carrier protein]-C-terminal Gly-Gly + 2-[(2R,5Z)-2-carboxy-4-methylthiazol-5(2H)-ylidene]ethyl phosphate + 2 H2O + H(+). Its pathway is cofactor biosynthesis; thiamine diphosphate biosynthesis. Its function is as follows. Catalyzes the rearrangement of 1-deoxy-D-xylulose 5-phosphate (DXP) to produce the thiazole phosphate moiety of thiamine. Sulfur is provided by the thiocarboxylate moiety of the carrier protein ThiS. In vitro, sulfur can be provided by H(2)S. The sequence is that of Thiazole synthase from Neorickettsia sennetsu (strain ATCC VR-367 / Miyayama) (Ehrlichia sennetsu).